Here is a 386-residue protein sequence, read N- to C-terminus: MSIRDTLKGGKGEVIKDPRVFIDPLTVFKDIPFREDILKEVAVAVRYFVKSDVKFSTLFLGLTGTGKTFVARYMLNEIEEVKQEDSDYSKVKQAYVNCREVGGTPQAVLSALTERLTTDEVPKHGINLGEYIEKIKEELNGKKALVYLDEVDTLIKRRGGDIVLYQLLRADADISVIMISNDINIRDYMEPRVLSSLGPTVFFKPYDAEQLKHILSIYAEYGLYRGTYDDNILSYIAAISAKEHGDARKAVNLLFRAAQLASGEGFIRKDHVDRAIIEYEQERLIEAIKALPFHYKLALMATMDAEDVVTAHKIYSDLCNQYKQKPLSYRRFSDIISELDMFGIIKVKIINKGRAGGIRKYIEITDKDKIRKALEDTMNLGFEEQW.

ATP is bound by residues 65 to 69 and Y206; that span reads TGKTF.

Belongs to the CDC6/cdc18 family.

Its function is as follows. Involved in regulation of DNA replication. The chain is ORC1-type DNA replication protein 3 (cdc6-3) from Sulfurisphaera tokodaii (strain DSM 16993 / JCM 10545 / NBRC 100140 / 7) (Sulfolobus tokodaii).